The following is a 1121-amino-acid chain: Cuscuta receptor 1 (1121 aa).

The N-terminal stretch at 1 to 20 (MGNIKFLLLVFFLIVVVVNG) is a signal peptide. Topologically, residues 21–1058 (CWEEERNALL…EESSELEDIQ (1038 aa)) are extracellular. The N-linked (GlcNAc...) asparagine glycan is linked to Asn91. LRR repeat units lie at residues 98-122 (FKSL…GFSK), 126-152 (LPNL…CWIS), 185-209 (LSNL…ALGE), 210-233 (LRNL…SLKI), 234-259 (FPSL…IIDL), 260-282 (SNLE…KGNK), 284-308 (MTSL…SLKS), and 309-331 (FSSL…IYAL). Asn224 is a glycosylation site (N-linked (GlcNAc...) asparagine). 3 N-linked (GlcNAc...) asparagine glycosylation sites follow: Asn298, Asn321, and Asn333. An LRR 9 repeat occupies 334 to 360 (LSTVEYLYFKGSSLNDNFLPNIGQMTS). Asn372 and Asn406 each carry an N-linked (GlcNAc...) asparagine glycan. LRR repeat units follow at residues 383–406 (LKYI…CLGN), 407–432 (LTSL…IWRR), 433–457 (LTSL…QFSD), 459–479 (KKLI…EYQN), 507–531 (QYDL…LLEN), 556–580 (HLHL…MSLA), 581–605 (FPKL…ISGI), 607–628 (LTIL…LAVV), 630–654 (SPQL…EFRP), 655–678 (HVLS…VFLS), 680–701 (LITL…TRDN), 702–725 (RRLL…ICNL), 726–749 (KIIN…VSSL), 751–772 (LKHI…IFNF), 773–796 (SSLI…IGSL), 797–820 (SNLN…ICML), 822–846 (NLSI…YLTQ), 914–938 (LKYM…LGNM), 939–961 (SNIH…TFSN), 962–986 (LQEI…LLEL), and 988–1012 (SLAV…QFGT). Asn531, Asn576, and Asn588 each carry an N-linked (GlcNAc...) asparagine glycan. N-linked (GlcNAc...) asparagine glycosylation occurs at Asn689. N-linked (GlcNAc...) asparagine glycosylation is present at Asn771. Asn822, Asn937, Asn945, Asn976, Asn998, Asn1014, and Asn1041 each carry an N-linked (GlcNAc...) asparagine glycan. Residues 1059–1079 (CFYIGFVVSFGAILLGLAAAL) traverse the membrane as a helical segment. Residues 1080-1121 (CLNRHWRRAWFRMIEALMFYCYYFVLDNIVTPIKSRWYKNVG) lie on the Cytoplasmic side of the membrane.

This sequence belongs to the RLP family. In terms of assembly, interacts with an 11 kDa glycine-rich protein (GRP) of C.reflexa. Interacts with SOBIR1 and SOBIR1-like kinases; presence or absence of GRP has no effect on interaction.

The protein localises to the cell membrane. The protein resides in the cell surface. Functionally, involved in plant defense. Contributes to resistance against parasitic plant C.reflexa. Acts as a receptor for the 11 kDa glycine-rich protein (GRP) of C.reflexa inducing immune responses such as emission of stress-related phytohormone ethylene, reactive oxygen species (ROS) release, and hypersensitive cell death. Recognizes a specific pathogen-associated molecular pattern (PAMP), a cysteine-rich peptide 21 (crip21), from GRP located on the cell wall of C.reflexa. This is Cuscuta receptor 1 from Solanum lycopersicum (Tomato).